A 382-amino-acid polypeptide reads, in one-letter code: Protein NASP homolog 1 (382 aa).

The segment at 1–39 (MDTENIADASDIRVKDASGDSDEKGNGTTTEEETVEQKE) is disordered. Residues 10-25 (SDIRVKDASGDSDEKG) are compositionally biased toward basic and acidic residues. One copy of the TPR 1 repeat lies at 42–75 (LAELLAAGRRALKVNDIDKASDSLSEATELSSEI). Residues 103 to 112 (QLLKGPGEKE) are compositionally biased toward basic and acidic residues. The segment at 103-151 (QLLKGPGEKESGDEEQAGNSDDKTDEENGETEKEDGEESGEEEDDDDDT) is disordered. The span at 125–150 (KTDEENGETEKEDGEESGEEEDDDDD) shows a compositional bias: acidic residues. 2 TPR repeats span residues 191–224 (ADVL…QRNV) and 233–266 (AQTY…LIAR). Positions 264–304 (IARQTELKHELERGVDDKEKKSEFENELKELEEMMPGVEEM) form a coiled coil. A disordered region spans residues 337–382 (PQEAGDQKEANDISSLVRRPAKRAVDAPTDNQAVKKEKEEEGTTSI). Basic and acidic residues predominate over residues 369–382 (AVKKEKEEEGTTSI).

Belongs to the NASP family. In terms of assembly, may interact with zinc finger protein tra-4 and histone deacetylase hda-1.

It is found in the nucleus. In terms of biological role, promotes normal hermaphrodite (XX) development, in concert with zinc finger protein tra-4 and histone deacetylase hda-1, perhaps as components of a complex. May act redundantly with nasp-2. Involved in innate immune response to B.thuringiensis strain DB27 and S.aureus bacteria. May play a role in the uptake or spreading of dsRNA. This chain is Protein NASP homolog 1, found in Caenorhabditis elegans.